The chain runs to 253 residues: Triosephosphate isomerase (253 aa).

A substrate-binding site is contributed by 9 to 11 (NWK). The active-site Electrophile is the histidine 97. Catalysis depends on glutamate 169, which acts as the Proton acceptor. Residues glycine 175, serine 215, and 236 to 237 (GG) contribute to the substrate site.

This sequence belongs to the triosephosphate isomerase family. In terms of assembly, homodimer.

Its subcellular location is the cytoplasm. It carries out the reaction D-glyceraldehyde 3-phosphate = dihydroxyacetone phosphate. It functions in the pathway carbohydrate biosynthesis; gluconeogenesis. Its pathway is carbohydrate degradation; glycolysis; D-glyceraldehyde 3-phosphate from glycerone phosphate: step 1/1. Involved in the gluconeogenesis. Catalyzes stereospecifically the conversion of dihydroxyacetone phosphate (DHAP) to D-glyceraldehyde-3-phosphate (G3P). In Staphylococcus haemolyticus (strain JCSC1435), this protein is Triosephosphate isomerase.